We begin with the raw amino-acid sequence, 357 residues long: THUMP domain-containing protein 1 (357 aa).

Polar residues predominate over residues 1 to 10; it reads MAARIQQSPQ. Disordered regions lie at residues 1–38 and 74–95; these read MAAR…GPRQ and GPEK…DDDV. Alanine 2 carries the post-translational modification N-acetylalanine. Phosphoserine is present on residues serine 8, serine 86, serine 88, and serine 119. The THUMP domain maps to 147–254; the sequence is DIYKTKKKKT…KAVCCLSVVK (108 aa). The residue at position 270 (serine 270) is a Phosphoserine. Polar residues-rich tracts occupy residues 276 to 287 and 298 to 315; these read QLNPKQAAQTGN and KSSQ…QVVP. The interval 276–357 is disordered; that stretch reads QLNPKQAAQT…EGSESNENDL (82 aa).

It belongs to the THUMPD1 family. Interacts with NAT10. Binds tRNA.

Its function is as follows. Functions as a tRNA-binding adapter to mediate NAT10-dependent tRNA acetylation modifying cytidine to N4-acetylcytidine (ac4C). The sequence is that of THUMP domain-containing protein 1 (THUMPD1) from Bos taurus (Bovine).